A 250-amino-acid chain; its full sequence is Peptidyl-tRNA hydrolase (250 aa).

Tyr-14 lines the tRNA pocket. His-19 acts as the Proton acceptor in catalysis. TRNA-binding residues include Phe-64, Asn-66, and Asn-112. A disordered region spans residues 192–250 (MGDGNQRPGGVKTDPAQLEKAPPKAQSHIRQARQNQKKPNIPESGPMAEMLKKLLGKKD). The span at 219-229 (HIRQARQNQKK) shows a compositional bias: polar residues. Basic and acidic residues predominate over residues 241–250 (MLKKLLGKKD).

This sequence belongs to the PTH family. Monomer.

It localises to the cytoplasm. The enzyme catalyses an N-acyl-L-alpha-aminoacyl-tRNA + H2O = an N-acyl-L-amino acid + a tRNA + H(+). Hydrolyzes ribosome-free peptidyl-tRNAs (with 1 or more amino acids incorporated), which drop off the ribosome during protein synthesis, or as a result of ribosome stalling. Functionally, catalyzes the release of premature peptidyl moieties from peptidyl-tRNA molecules trapped in stalled 50S ribosomal subunits, and thus maintains levels of free tRNAs and 50S ribosomes. This chain is Peptidyl-tRNA hydrolase, found in Brucella abortus (strain 2308).